The following is a 1037-amino-acid chain: Exportin-T (1037 aa).

This sequence belongs to the exportin family.

Its subcellular location is the nucleus. It is found in the cytoplasm. In terms of biological role, tRNA nucleus export receptor which facilitates tRNA translocation across the nuclear pore complex. Involved in pre-tRNA splicing, probably by affecting the interaction of pre-tRNA with splicing endonuclease. This Neosartorya fischeri (strain ATCC 1020 / DSM 3700 / CBS 544.65 / FGSC A1164 / JCM 1740 / NRRL 181 / WB 181) (Aspergillus fischerianus) protein is Exportin-T (los1).